We begin with the raw amino-acid sequence, 3122 residues long: tRNA nuclease CdiA-2 (3122 aa).

The interval 36-205 (RAGVVPAWLS…ATLTTGNPNF (170 aa)) is two-partner system transport domain (TPS). Residues 54–74 (VALAVLVAAGVVPIWVNAQVV) form a helical membrane-spanning segment. Positions 256 to 1254 (VVAGSNQVDY…GGSVAIQASG (999 aa)) are FHA-1. The tract at residues 492-512 (GMTLGGGSLSNQGGRANSQGP) is disordered. The segment covering 500 to 512 (LSNQGGRANSQGP) has biased composition (polar residues). The tract at residues 1345 to 1635 (TRRVMQTSGN…SATAVNVLSN (291 aa)) is receptor binding domain (RBD). Residues 1790-1845 (TAGNIDLKNTQVFTNSGTVKADTTLALQGKQIDNAFGALQSGGLTSLDTTGNVDLT) are periplasmic FHA-1 repeat (pFR). The interval 1947–2085 (SDTDLNSATG…TERHVYNSRE (139 aa)) is FHA-2. Disordered stretches follow at residues 2002-2031 (TSTI…ALTG), 2151-2174 (TTSQ…MSGG), and 2325-2352 (IGVQ…GSSI). A pretoxin (PT) domain region spans residues 2086–2825 (THSRSGVVSG…SAGAAMASNV (740 aa)). 2 stretches are compositionally biased toward low complexity: residues 2151–2170 (TTSQ…HSGL) and 2325–2341 (IGVQ…MQSS). A compositionally biased stretch (polar residues) spans 2342–2352 (EDQTIQRGSSI). Residues 2821–3122 (MASNVELYNA…NITIIKPKGN (302 aa)) form a C-terminal effector domain (CT), has tRNA nuclease activity region. The short motif at 2826–2829 (ELYN) is the ELYN C-terminal motif element. Residues 2948-3000 (GATDRTPPSNAILSNSNSDNNSTQGSQSGTVTKTPNPEATGSLSGKPTQIPPL) are disordered. The segment at 2948-3122 (GATDRTPPSN…NITIIKPKGN (175 aa)) is truncated CT domain, has tRNA nuclease activity, sufficient for interaction with CdiI-2. Over residues 2953–2994 (TPPSNAILSNSNSDNNSTQGSQSGTVTKTPNPEATGSLSGKP) the composition is skewed to polar residues. Positions 2987 to 3122 (TGSLSGKPTQ…NITIIKPKGN (136 aa)) are has tRNase activity. Active-site residues include E3012, D3039, D3048, and K3067.

The protein in the N-terminal section; belongs to the CdiA toxin family. As to quaternary structure, interacts with cognate immunity protein CdiI, which blocks its tRNA nuclease activity. The truncated CT fragment (residues 2948-3122) specifically interacts with cognate CdiI which inhibits the tRNA nuclease activity. The truncated CT is more stable in vitro than the original CT fragment characterized in E.coli.

The protein resides in the membrane. It is found in the secreted. Its subcellular location is the target cell. It localises to the target cell cytoplasm. Toxic component of a toxin-immunity protein module, which functions as a cellular contact-dependent growth inhibition (CDI) system. CDI modules allow bacteria to communicate with and inhibit the growth of closely related neighboring bacteria in a contact-dependent fashion. The C-terminal 301 residues (the CT fragment) cleaves near the C-terminus of E.coli tRNA1B(Ala), probably preventing tRNA charging, and inhibits growth in E.coli. A truncated CT fragment (residues 2948-3122) has tRNA endonuclease activity on several B.thailandensis tRNAs as well as tRNA2(Arg) where it cleaves after A-70 and U-71. Inactive CT domain binds tRNA, probably in a 1:1 complex. Toxic activity is neutralized by coexpression of the cognate immunity protein CdiI in E.coli, but not by non-cognate immunity proteins from other strains of B.pseudomallei. May use lipopolysaccharide as its target cell receptor. Probably gains access to the cytoplasm of target cells (B.thailandensis strain E264) by using integral inner membrane protein BTH_II0599. Protein BTH_I0359 is also implicated in an unknown fashion in CDI in B.thailandensis strain E264. In terms of biological role, expression of this cdiAIB locus in B.thailandensis confers protection against other bacteria carrying the locus; growth inhibition requires cellular contact. Functionally, the CdiA protein is thought to be exported from the cell through the central lumen of CdiB, the other half of its two-partner system (TPS). The TPS domain probably remains associated with CdiB while the FHA-1 domain forms an extended filament with the receptor-binding domain (RBD) at its extremity; in the secretion arrested state the C-terminus of the RBD domain form a hairpin-like structure as the FHA-2, PT and CT domains are periplasmic. Upon binding to a target cell outer membrane receptor (possibly a lipoprotein in this CDI) a signal is transmitted to activate secretion. The filament elongates slightly, the rest of CdiA is secreted and the FHA-2 domain becomes stably associated with the target cell's outer membrane where it facilitates entry of the toxic CT domain into the target cell periplasm. From there the toxic CT domain is cleaved and gains access to the target cell cytoplasm via an inner membrane protein (probably inner membrane protein BTH_II0599). The chain is tRNA nuclease CdiA-2 (cdiA2) from Burkholderia pseudomallei (strain 1026b).